The chain runs to 389 residues: Ankyrin repeat domain-containing protein 42 (389 aa).

Positions 1–21 (MPGVANSGPSTSSRETANPCS) are disordered. The segment covering 7 to 19 (SGPSTSSRETANP) has biased composition (polar residues). 9 ANK repeats span residues 25–60 (VHFG…DITH), 64–93 (RGWT…NLTA), 97–126 (RGCT…DPSV), 130–159 (REWR…SIED), 163–192 (NGNL…SATQ), 200–232 (NGEN…DLED), 235–265 (TLAF…NINE), 269–298 (NGST…DSNI), and 302–332 (AGER…DIDD).

The chain is Ankyrin repeat domain-containing protein 42 (ANKRD42) from Homo sapiens (Human).